A 313-amino-acid polypeptide reads, in one-letter code: PGR5-like protein 1B, chloroplastic (313 aa).

Residues 1–49 (MAFTLTIPRFSAISRKPITCSSSRTQCPAPFTHGRSISLRRRLTLLPLK) constitute a chloroplast transit peptide. N-acetylalanine is present on alanine 50. Over 50 to 187 (ASTDQSGQVG…KVYSDLAIDY (138 aa)) the chain is Stromal. The cysteines at positions 71 and 172 are disulfide-linked. The helical transmembrane segment at 188–208 (FKMFLLNVPATVVALGLFFFL) threads the bilayer. The Lumenal, thylakoid portion of the chain corresponds to 209–225 (DDITGFEITYLLELPEP). Residues 226–246 (FSFIFTWFAAVPAIVYLALSL) form a helical membrane-spanning segment. Over 247 to 313 (TKLILKDFLI…LITLPEGGKA (67 aa)) the chain is Stromal.

Belongs to the PGR5 family. In terms of assembly, homodimer and heterodimer with PGR5. Interacts with PGR5, FD2, psaD1, LFNR1 and LFNR2. Also interacts with petC and a Fe-containing cofactor (FCC). Post-translationally, disulfide bonds; Cys-289 and Cys-292 are probably involved in the formation of disulfide bridges with 'Cys-11' and 'Cys-105' of PGR5 while Cys-261 and Cys-264 are probably involved in the binding of a Fe-containing cofactor (FCC).

The protein resides in the plastid. Its subcellular location is the chloroplast thylakoid membrane. Its activity is regulated as follows. Inhibited by antimycin A. Functionally, ferredoxin-plastoquinone reductase involved in cyclic electron flow (CEF) around photosystem I. The homodimer is probably not involved in CEF. The sequence is that of PGR5-like protein 1B, chloroplastic (PGRL1B) from Arabidopsis thaliana (Mouse-ear cress).